The primary structure comprises 959 residues: Probable serine/threonine-protein kinase DDB_G0291664 (959 aa).

The segment at 154 to 213 is disordered; sequence QQQQQQQLTPPPSPPLLPIPQPPAQNEEQQLTQPPSIPPPQQKQIKIQKSDRGTQVKSIT. A compositionally biased stretch (pro residues) spans 162–176; that stretch reads TPPPSPPLLPIPQPP. ANK repeat units follow at residues 294–324 and 333–362; these read KGET…CMGI and LNKN…PLKM. Residues 482 to 762 enclose the Protein kinase domain; it reads IDFHTQIGSA…EVGIIETEFL (281 aa). ATP is bound by residues 488–496 and Lys509; that span reads IGSAGNASV. Asp610 serves as the catalytic Proton acceptor. The tract at residues 904–959 is disordered; sequence NNINNNNNNNNNCNNSKKFKTTSESTSALGSDASSSSSPSSSSPSPKYSASIYHHQ.

This sequence belongs to the protein kinase superfamily. Ser/Thr protein kinase family.

The catalysed reaction is L-seryl-[protein] + ATP = O-phospho-L-seryl-[protein] + ADP + H(+). It carries out the reaction L-threonyl-[protein] + ATP = O-phospho-L-threonyl-[protein] + ADP + H(+). This chain is Probable serine/threonine-protein kinase DDB_G0291664, found in Dictyostelium discoideum (Social amoeba).